The sequence spans 153 residues: MQEAVTSKVEEVAQRVAQSEGLELVEVEVKGGGSARLVRISIDKPEGVTHADCQTVSDKVGEILEAEDAIPGHYTLEVSSPGVERKLLKPQDYQRFHGQKAKITVREEVDGRRTWEGTLAGFADGVISLEVAPGEIRRLPFDQVKKANLKFEW.

This sequence belongs to the RimP family.

It is found in the cytoplasm. Required for maturation of 30S ribosomal subunits. The polypeptide is Ribosome maturation factor RimP (Solibacter usitatus (strain Ellin6076)).